The chain runs to 252 residues: Probable transcriptional regulatory protein A1E_02520 (252 aa).

Belongs to the TACO1 family.

It is found in the cytoplasm. The polypeptide is Probable transcriptional regulatory protein A1E_02520 (Rickettsia canadensis (strain McKiel)).